Here is a 140-residue protein sequence, read N- to C-terminus: ATP synthase epsilon chain (140 aa).

It belongs to the ATPase epsilon chain family. As to quaternary structure, F-type ATPases have 2 components, CF(1) - the catalytic core - and CF(0) - the membrane proton channel. CF(1) has five subunits: alpha(3), beta(3), gamma(1), delta(1), epsilon(1). CF(0) has three main subunits: a, b and c.

The protein localises to the cell membrane. In terms of biological role, produces ATP from ADP in the presence of a proton gradient across the membrane. The sequence is that of ATP synthase epsilon chain (atpC) from Enterococcus hirae (strain ATCC 9790 / DSM 20160 / JCM 8729 / LMG 6399 / NBRC 3181 / NCIMB 6459 / NCDO 1258 / NCTC 12367 / WDCM 00089 / R).